The primary structure comprises 195 residues: UPF0167 protein CbrC (195 aa).

Belongs to the UPF0167 family.

In Escherichia coli (strain K12), this protein is UPF0167 protein CbrC (cbrC).